We begin with the raw amino-acid sequence, 156 residues long: Cyanate hydratase (156 aa).

Residues arginine 96, glutamate 99, and serine 122 contribute to the active site.

This sequence belongs to the cyanase family.

The enzyme catalyses cyanate + hydrogencarbonate + 3 H(+) = NH4(+) + 2 CO2. In terms of biological role, catalyzes the reaction of cyanate with bicarbonate to produce ammonia and carbon dioxide. In Pseudomonas aeruginosa (strain LESB58), this protein is Cyanate hydratase.